An 800-amino-acid polypeptide reads, in one-letter code: Transcription initiation factor TFIID subunit 5 (800 aa).

The tract at residues 1-74 (MAALAEEQTE…KPTVAVSAAA (74 aa)) is disordered. The segment covering 30-50 (DGAGEGSGGTTNNGPNGGGGN) has biased composition (gly residues). Residues 92 to 124 (HDRQTLLAVLQFLRQSKLREAEEALRREAGLLE) enclose the LisH domain. Residues 153–189 (ASAPGPAAPDPPGTGASGATVVSGSASGPAAPGKVGS) are disordered. Residues 165 to 189 (GTGASGATVVSGSASGPAAPGKVGS) show a composition bias toward low complexity. The segment at 194–340 (DQPDVSAVLS…NIVQEHLYID (147 aa)) is NTD2; involved in homo-dimerization; also involved in TFIID-TFIIF contacts in the RNA Pol II pre-initiation complex (PIC). Positions 384–395 (VPLDDEDEEGEN) are enriched in acidic residues. Residues 384–438 (VPLDDEDEEGENEEGKPKKKKPKKDSIGSKSKKQDPNAPPQNRIPLPELKDSDKL) form a disordered region. A compositionally biased stretch (basic and acidic residues) spans 407-418 (KDSIGSKSKKQD). WD repeat units lie at residues 468 to 507 (NAYQGLTAVDVTDDSSLIAGGFADSTVRVWSVTPKKLRSV), 541 to 580 (GHSGPVYGASFSPDRNYLLSSSEDGTVRLWSLQTFTCLVG), 583 to 624 (GHNY…RIFA), 625 to 666 (GHLA…RIFT), 667 to 706 (GHKGPIHSLTFSPNGRFLATGATDGRVLLWDIGHGLMVGE), and 709 to 748 (GHTDTVCSLRFSRDGEILASGSMDNTVRLWDAIKAFEDLE).

The protein belongs to the WD repeat TAF5 family. Homodimer. Component of the TFIID basal transcription factor complex, composed of TATA-box-binding protein TBP, and a number of TBP-associated factors (TAFs), including TAF1, TAF2, TAF3, TAF4, TAF5, TAF6, TAF7, TAF8, TAF9, TAF10, TAF11, TAF12 and TAF13. The TFIID complex structure can be divided into 3 modules TFIID-A, TFIID-B, and TFIID-C. TAF5 forms the TFIID-A module together with TAF3 and TBP, and in TFIID-B with TAF8. Component of the TFTC-HAT complex, at least composed of TAF5L, TAF6L, TADA3L, SUPT3H/SPT3, TAF2, TAF4, TAF5, GCN5L2/GCN5, TAF10 and TRRAP. TBP is not part of the TFTC-HAT complex. Interacts strongly with the histone H4-related TAF6 and the histone H3-related TAF9, as well as a stable complex comprised of both TAF6 and TAF9. Apparently weaker interactions with TBP, TAF1, TAF11, and TAF12, but not TAF7, also have been observed. In terms of assembly, (Microbial infection) Interacts with SV40 Large T antigen.

The protein resides in the nucleus. Its function is as follows. The TFIID basal transcription factor complex plays a major role in the initiation of RNA polymerase II (Pol II)-dependent transcription. TFIID recognizes and binds promoters with or without a TATA box via its subunit TBP, a TATA-box-binding protein, and promotes assembly of the pre-initiation complex (PIC). The TFIID complex consists of TBP and TBP-associated factors (TAFs), including TAF1, TAF2, TAF3, TAF4, TAF5, TAF6, TAF7, TAF8, TAF9, TAF10, TAF11, TAF12 and TAF13. The TFIID complex structure can be divided into 3 modules TFIID-A, TFIID-B, and TFIID-C. TAF5 is involved in two modules of TFIID, in TFIID-A together with TAF3 and TBP, and in TFIID-B with TAF8. Involved in contacts between TFIID and TFIIF in the PIC. This Homo sapiens (Human) protein is Transcription initiation factor TFIID subunit 5 (TAF5).